The following is a 148-amino-acid chain: UPF0756 membrane protein YeaL (148 aa).

Helical transmembrane passes span 14–34 (ALGF…LIIV), 51–71 (LTIG…SGSL), 80–100 (FFNW…WLGG), and 121–141 (VLGV…AGLV).

Belongs to the UPF0756 family.

Its subcellular location is the cell membrane. The chain is UPF0756 membrane protein YeaL from Escherichia fergusonii (strain ATCC 35469 / DSM 13698 / CCUG 18766 / IAM 14443 / JCM 21226 / LMG 7866 / NBRC 102419 / NCTC 12128 / CDC 0568-73).